Reading from the N-terminus, the 352-residue chain is MHVPIRLLEWFKVEQTLVIQKKKRFGFSQGIGITLLIAIVAKYLAELPFLNIMGQLVIAILIGMVWRAAIGVPHDAIAGTNFASKKLLRFGIILLGMRLNLVDIAKAGPKVLVIAAVVITFTIFVVYGLTKVFKVEKKLGILTACGTAICGAAAVVAIAPQVKAKDDETAVGAAIIAILGTIFTLIYTLLYPVLGLSPYGYGVFSGATLHEIAHVIAAAAPGGSAAVDIAVIVKLTRVAMLVPVAILIGLWFGKSEGSKEKRSWRDLPIPWFIFGFLAMSAVHSLGIIPEVVAGYIVVIAYMLIAMAMAGLGLNVEFKTFRKLGSKAFVAGLIGSVCLSVLGYVLVYALGFM.

A run of 10 helical transmembrane segments spans residues 25 to 47 (FGFS…LAEL), 52 to 71 (IMGQ…AAIG), 111 to 130 (VLVI…YGLT), 140 to 162 (GILT…APQV), 169 to 191 (TAVG…TLLY), 201 to 223 (YGVF…APGG), 230 to 252 (AVIV…GLWF), 267 to 289 (LPIP…GIIP), 291 to 313 (VVAG…GLGL), and 328 to 350 (FVAG…YALG).

It belongs to the UPF0324 family.

It localises to the cell membrane. The sequence is that of UPF0324 membrane protein BCE_5279 from Bacillus cereus (strain ATCC 10987 / NRS 248).